The chain runs to 157 residues: Large ribosomal subunit protein uL15 (157 aa).

Positions 1-56 are disordered; sequence MRLEDIRPQPGSTRRRRRLGRGIAAGQGASCGKGMRGQKARKGGGPRPGFEGGQTP. Residues 23-35 show a composition bias toward gly residues; sequence IAAGQGASCGKGM.

Belongs to the universal ribosomal protein uL15 family. As to quaternary structure, part of the 50S ribosomal subunit.

Functionally, binds to the 23S rRNA. In Synechococcus sp. (strain JA-3-3Ab) (Cyanobacteria bacterium Yellowstone A-Prime), this protein is Large ribosomal subunit protein uL15.